The sequence spans 319 residues: Probable enoyl-CoA hydratase alpha subunit (319 aa).

Residues 199-298 (FEAAKQRRLV…EIGMPVVLDW (100 aa)) are DUF35.

Belongs to the thioester dehydratase family. In terms of assembly, heterodimer composed of ChsH1 and ChsH2. Two heterodimers combine to form a heterotetramer. The complex interacts with Ltp2 via the DUF35 C-terminal region of ChsH2.

Functionally, probably involved in bile acid degradation. This Thermomonospora curvata (strain ATCC 19995 / DSM 43183 / JCM 3096 / KCTC 9072 / NBRC 15933 / NCIMB 10081 / Henssen B9) protein is Probable enoyl-CoA hydratase alpha subunit.